We begin with the raw amino-acid sequence, 486 residues long: Photosystem II CP43 reaction center protein (486 aa).

The propeptide occupies Met-1–Glu-28. 5 helical membrane-spanning segments follow: residues Leu-82 to Ala-106, Leu-147 to Asn-168, Lys-191 to Asn-213, Lys-268 to Ser-288, and Trp-304 to Ala-325. Glu-380 is a binding site for [CaMn4O5] cluster. The helical transmembrane segment at Arg-460–Pro-484 threads the bilayer.

It belongs to the PsbB/PsbC family. PsbC subfamily. PSII is composed of 1 copy each of membrane proteins PsbA, PsbB, PsbC, PsbD, PsbE, PsbF, PsbH, PsbI, PsbJ, PsbK, PsbL, PsbM, PsbT, PsbX, PsbY, PsbZ, Psb30/Ycf12, at least 3 peripheral proteins of the oxygen-evolving complex and a large number of cofactors. It forms dimeric complexes. Binds multiple chlorophylls and provides some of the ligands for the Ca-4Mn-5O cluster of the oxygen-evolving complex. It may also provide a ligand for a Cl- that is required for oxygen evolution. PSII binds additional chlorophylls, carotenoids and specific lipids. serves as cofactor.

It is found in the plastid. Its subcellular location is the chloroplast thylakoid membrane. Its function is as follows. One of the components of the core complex of photosystem II (PSII). It binds chlorophyll and helps catalyze the primary light-induced photochemical processes of PSII. PSII is a light-driven water:plastoquinone oxidoreductase, using light energy to abstract electrons from H(2)O, generating O(2) and a proton gradient subsequently used for ATP formation. This is Photosystem II CP43 reaction center protein from Gracilaria tenuistipitata var. liui (Red alga).